The chain runs to 222 residues: N-(5'-phosphoribosyl)anthranilate isomerase (222 aa).

This sequence belongs to the TrpF family.

It catalyses the reaction N-(5-phospho-beta-D-ribosyl)anthranilate = 1-(2-carboxyphenylamino)-1-deoxy-D-ribulose 5-phosphate. It functions in the pathway amino-acid biosynthesis; L-tryptophan biosynthesis; L-tryptophan from chorismate: step 3/5. The chain is N-(5'-phosphoribosyl)anthranilate isomerase from Prosthecochloris aestuarii (strain DSM 271 / SK 413).